A 63-amino-acid polypeptide reads, in one-letter code: Large ribosomal subunit protein bL35 (63 aa).

This sequence belongs to the bacterial ribosomal protein bL35 family.

The chain is Large ribosomal subunit protein bL35 from Sulfurovum sp. (strain NBC37-1).